Reading from the N-terminus, the 334-residue chain is N-acetylmuramate/N-acetylglucosamine kinase (334 aa).

This sequence belongs to the kinase AmgK family.

It catalyses the reaction N-acetyl-D-muramate + ATP = N-acetyl-alpha-D-muramate 1-phosphate + ADP + H(+). The enzyme catalyses N-acetyl-D-glucosamine + ATP = N-acetyl-alpha-D-glucosamine 1-phosphate + ADP + H(+). It functions in the pathway cell wall biogenesis; peptidoglycan recycling. In terms of biological role, sugar kinase that catalyzes the ATP-dependent phosphorylation of N-acetylmuramate (MurNAc) and N-acetylglucosamine (GlcNAc) at its C1 hydroxyl group, leading to MurNAc alpha-1P and GlcNAc alpha-1P, respectively. Is likely involved in peptidoglycan recycling as part of a cell wall recycling pathway that bypasses de novo biosynthesis of the peptidoglycan precursor UDP-MurNAc. Is able to complement the fosfomycin sensitivity phenotype of a P.putida mutant lacking amgK. The protein is N-acetylmuramate/N-acetylglucosamine kinase of Neisseria meningitidis serogroup B (strain ATCC BAA-335 / MC58).